A 901-amino-acid polypeptide reads, in one-letter code: HTH-type transcriptional regulator MalT (901 aa).

39 to 46 provides a ligand contact to ATP; sequence SPAGYGKT. The HTH luxR-type domain occupies 829–894; that stretch reads ELIRTSPLTQ…DAVQHAQQLL (66 aa). The segment at residues 853–872 is a DNA-binding region (H-T-H motif); sequence NEQIAGELAVAATTIKTHIR.

Belongs to the MalT family. In terms of assembly, monomer in solution. Oligomerizes to an active state in the presence of the positive effectors ATP and maltotriose.

With respect to regulation, activated by ATP and maltotriose, which are both required for DNA binding. Functionally, positively regulates the transcription of the maltose regulon whose gene products are responsible for uptake and catabolism of malto-oligosaccharides. Specifically binds to the promoter region of its target genes, recognizing a short DNA motif called the MalT box. The chain is HTH-type transcriptional regulator MalT from Enterobacter sp. (strain 638).